Here is a 402-residue protein sequence, read N- to C-terminus: Xylose/arabinose-binding protein XylF (402 aa).

Residues 38 to 58 (GIIAGVLAAFGAGFGSGYVTA) form a helical membrane-spanning segment.

It belongs to the bacterial solute-binding protein 2 family. In terms of assembly, the complex is composed of two ATP-binding proteins (XylG), two transmembrane proteins (XylH) and a solute-binding protein (XylF).

It is found in the cell membrane. In terms of biological role, part of the ABC transporter complex XylFGH involved in the uptake of xylose and arabinose. The chain is Xylose/arabinose-binding protein XylF from Sulfolobus acidocaldarius (strain ATCC 33909 / DSM 639 / JCM 8929 / NBRC 15157 / NCIMB 11770).